A 490-amino-acid chain; its full sequence is B3 domain-containing protein LOC_Os12g40080 (490 aa).

The TF-B3 1 DNA-binding region spans 24–117 (GKSFIKVMIT…HFKVWIYDPS (94 aa)). Residues 161 to 191 (SGHSKETSEINPANSPSWKPTERVPSSEELD) form a disordered region. Residues 169–178 (EINPANSPSW) are compositionally biased toward polar residues. DNA-binding regions (TF-B3) lie at residues 236–331 (FYIT…FHPL) and 389–487 (VAVM…IRKS).

The protein resides in the nucleus. This chain is B3 domain-containing protein LOC_Os12g40080, found in Oryza sativa subsp. japonica (Rice).